A 1340-amino-acid chain; its full sequence is Protein SHORT ROOT IN SALT MEDIUM 1 (1340 aa).

Disordered stretches follow at residues 1–73 (MHRD…RSHL), 161–185 (YGEQSSSYLGRELQNEPTRRYADPS), 357–473 (EEER…IRRS), 723–750 (TVEVTKDAEKKSPGDTSGTPTTGTKKTV), 784–990 (PETT…PPRA), and 1063–1269 (RNQR…KREE). Positions 7 to 39 (SSRGTGYGQQQYGSQSGYSQNLGSGYPGSSVSG) are enriched in low complexity. Positions 46-60 (QISLSSRHPSITGAP) are enriched in polar residues. Composition is skewed to basic and acidic residues over residues 173–182 (LQNEPTRRYA), 357–470 (EEER…EASI), and 723–735 (TVEVTKDAEKKSP). A coiled-coil region spans residues 355-426 (LREEERRRED…RERKRALEIK (72 aa)). Residues 810–824 (GDTSDPSAKANEQTP) are compositionally biased toward polar residues. Positions 828-840 (IVKKKIIKRVAKR) are enriched in basic residues. Basic and acidic residues-rich tracts occupy residues 841–872 (KVAEIDNKMDGDSKKDGDSDEKKVMEVGKKSS), 887–988 (EDVK…EEPP), 1069–1097 (HQEELSVKQNEAKSQDKRQKTAEHEDKEA), and 1105–1138 (PGKDDKETSGKETVDGSREIADKEAVAKTKETLG). A coiled-coil region spans residues 1052–1086 (LKKLRVKIVRQRNQRKRHQEELSVKQNEAKSQDKR). Residues 1153–1204 (ENQDEEDDDGDDDPEEDPEEDPEEDPEEDPEEDPEECEEMDVANTEQEEPAE) show a composition bias toward acidic residues. Composition is skewed to basic and acidic residues over residues 1205–1214 (EPQKKEENLE) and 1229–1257 (TDNRKEERGPNDSKTEIKPKSETEKHGKQ). The EF-hand domain occupies 1270–1305 (TVDKELLQAFRFFDRNQAGYVRVEDMRVTIHSLGKF).

Interacts with BHLH148/RITF1. In terms of tissue distribution, expressed ubiquitously at high levels, including in guard cells.

Its subcellular location is the nucleus. In terms of biological role, required for salt tolerance and sodium (Na) homeostasis after salt stress. Together with BHLH148/RITF1, regulates the transcription of several genes involved in the detoxification of reactive oxygen species (ROS) generated by salt (NaCl) stress. Binds calcium. In Arabidopsis thaliana (Mouse-ear cress), this protein is Protein SHORT ROOT IN SALT MEDIUM 1.